Consider the following 165-residue polypeptide: Large ribosomal subunit protein uL5 (165 aa).

The protein belongs to the universal ribosomal protein uL5 family. In terms of assembly, part of the 50S ribosomal subunit; contacts the 5S rRNA and probably tRNA. Forms a bridge to the 30S subunit in the 70S ribosome.

Functionally, this is one of the proteins that bind and probably mediate the attachment of the 5S RNA into the large ribosomal subunit, where it forms part of the central protuberance. In the 70S ribosome it contacts protein S13 of the 30S subunit (bridge B1b), connecting the 2 subunits; this bridge is implicated in subunit movement. May contact the P site tRNA; the 5S rRNA and some of its associated proteins might help stabilize positioning of ribosome-bound tRNAs. In Methanoregula boonei (strain DSM 21154 / JCM 14090 / 6A8), this protein is Large ribosomal subunit protein uL5.